The following is a 354-amino-acid chain: Guanine nucleotide-binding protein G(i) subunit alpha-3 (354 aa).

G2 carries the N-myristoyl glycine lipid modification. Residue C3 is the site of S-palmitoyl cysteine attachment. The region spanning 32-354 (KEVKLLLLGA…KNNLKECGLY (323 aa)) is the G-alpha domain. Residues 35-48 (KLLLLGAGESGKST) are G1 motif. 25 residues coordinate GTP: G42, E43, S44, G45, K46, S47, T48, D150, S151, L175, R176, T177, R178, V179, K180, T181, V201, G203, N269, K270, D272, L273, C325, A326, and T327. S47 contributes to the Mg(2+) binding site. Positions 173–181 (DVLRTRVKT) are G2 motif. Residue T181 participates in Mg(2+) binding. The segment at 196 to 205 (FKMFDVGGQR) is G3 motif. Residues 265–272 (ILFLNKKD) are G4 motif. The interval 324–329 (TCATDT) is G5 motif.

This sequence belongs to the G-alpha family. G(i/o/t/z) subfamily. Heterotrimeric G proteins are composed of 3 units; alpha, beta and gamma. The alpha subunit contains the guanine nucleotide binding site. GTP binding causes dissociation of the heterotrimer, liberating the individual subunits so that they can interact with downstream effector proteins. Forms a complex with CCDC88A/GIV and EGFR which leads to enhanced EGFR signaling and triggering of cell migration; ligand stimulation is required for recruitment of GNAI3 to the complex. Interacts (inactive GDP-bound form) with CCDC88A/GIV (via GBA motif); the interaction leads to activation of GNAI3. Interacts (inactive GDP-bound form) with CCDC88C/DAPLE (via GBA motif); the interaction leads to activation of GNAI3. Interacts (inactive GDP-bound form) with NUCB1 (via GBA motif) and NUCB2 (via GBA motif); the interaction leads to activation of GNAI3. Interacts (inactive GDP-bound form) with PLCD4 (via GBA motif); the interaction leads to activation of GNAI3. Interacts with INSR; the interaction is probably mediated by CCDC88A/GIV. Interacts with GPSM1. Interacts (GDP-bound form) with GPSM2 (via GoLoco domains). Does not interact with RGS2. Interacts with RGS8 and RGS10; this strongly enhances the intrinsic GTPase activity. Interacts with RGS12. Interacts with RGS16; this strongly enhances the intrinsic GTPase activity. Interacts (via active GTP- or inactive GDP-bound form) with RGS14. Interacts (via active GTP-bound form) with TRPC5 (via ANK repeats) in a homotetrameric ion channel; the interaction is direct and activates the channel activity. As to expression, ubiquitous.

The protein resides in the cytoplasm. Its subcellular location is the cell membrane. It is found in the cytoskeleton. It localises to the microtubule organizing center. The protein localises to the centrosome. Heterotrimeric guanine nucleotide-binding proteins (G proteins) function as transducers downstream of G protein-coupled receptors (GPCRs) in numerous signaling cascades. The alpha chain contains the guanine nucleotide binding site and alternates between an active, GTP-bound state and an inactive, GDP-bound state. Signaling by an activated GPCR promotes GDP release and GTP binding. The alpha subunit has a low GTPase activity that converts bound GTP to GDP, thereby terminating the signal. Both GDP release and GTP hydrolysis are modulated by numerous regulatory proteins. Signaling is mediated via effector proteins, such as adenylate cyclase. Inhibits adenylate cyclase activity, leading to decreased intracellular cAMP levels. Stimulates the activity of receptor-regulated K(+) channels. The active GTP-bound form prevents the association of RGS14 with centrosomes and is required for the translocation of RGS14 from the cytoplasm to the plasma membrane. May play a role in cell division. The active GTP-bound form activates the calcium permeant TRPC5 ion channels. The sequence is that of Guanine nucleotide-binding protein G(i) subunit alpha-3 (Gnai3) from Rattus norvegicus (Rat).